The sequence spans 521 residues: Non-specific phospholipase C5 (521 aa).

The span at 478-487 shows a compositional bias: basic and acidic residues; the sequence is SKKARERGGD. Residues 478–521 form a disordered region; sequence SKKARERGGDENDIVFCVDDDDDHNVVKPPPSQSEPSHATPWSN. The span at 511-521 shows a compositional bias: polar residues; that stretch reads SEPSHATPWSN.

It belongs to the bacterial phospholipase C family. As to expression, specifically expressed in flowers.

Its subcellular location is the cytoplasm. The protein resides in the cytosol. It carries out the reaction a 1,2-diacyl-sn-glycero-3-phosphocholine + H2O = phosphocholine + a 1,2-diacyl-sn-glycerol + H(+). In terms of biological role, non-specific phospholipase C (PLC) which assumes minor PLC activity during inorganic phosphate starvation. Can hydrolyze both phosphatidylcholine (PC) and phosphatidylethanolamine (PE). Required for normal accumulation of digalactosyldiacylglycerol (DGDG) during phosphate limitation and may contribute to the conversion of phospholipids to diacylglycerol, the substrate for galactolipid synthesis. This is Non-specific phospholipase C5 (NPC5) from Arabidopsis thaliana (Mouse-ear cress).